We begin with the raw amino-acid sequence, 604 residues long: Prostaglandin G/H synthase 2 (604 aa).

A signal peptide spans 1-17 (MLARAGLLCASLSPPHA). An EGF-like domain is found at 18–55 (ANPCCSNPCQNQGVCMSIGFDQYMCDCSRTGFYGENCS). Disulfide bonds link Cys-21–Cys-32, Cys-22–Cys-145, Cys-26–Cys-42, and Cys-44–Cys-54. N-linked (GlcNAc...) asparagine glycosylation occurs at Asn-53. Arg-106 lines the substrate pocket. An N-linked (GlcNAc...) asparagine glycan is attached at Asn-130. Residue His-193 is the Proton acceptor of the active site. Position 341 (Tyr-341) interacts with substrate. The active-site For cyclooxygenase activity is the Tyr-371. A heme b-binding site is contributed by His-374. Asn-396 is a glycosylation site (N-linked (GlcNAc...) asparagine). S-nitrosocysteine is present on Cys-526. A disulfide bond links Cys-555 and Cys-561. Asn-580 carries N-linked (GlcNAc...) asparagine glycosylation.

This sequence belongs to the prostaglandin G/H synthase family. Homodimer. Heme b serves as cofactor. S-nitrosylation by NOS2 (iNOS) activates enzyme activity. S-nitrosylation may take place on different Cys residues in addition to Cys-526.

It localises to the microsome membrane. It is found in the endoplasmic reticulum membrane. Its subcellular location is the nucleus inner membrane. The protein localises to the nucleus outer membrane. The catalysed reaction is (5Z,8Z,11Z,14Z)-eicosatetraenoate + AH2 + 2 O2 = prostaglandin H2 + A + H2O. It catalyses the reaction (5Z,8Z,11Z,14Z)-eicosatetraenoate + 2 O2 = prostaglandin G2. It carries out the reaction prostaglandin G2 + AH2 = prostaglandin H2 + A + H2O. The enzyme catalyses (5Z,8Z,11Z,14Z,17Z)-eicosapentaenoate + 2 O2 = prostaglandin G3. The catalysed reaction is prostaglandin G3 + AH2 = prostaglandin H3 + A + H2O. It catalyses the reaction (8Z,11Z,14Z)-eicosatrienoate + 2 O2 = prostaglandin G1. It carries out the reaction prostaglandin G1 + AH2 = prostaglandin H1 + A + H2O. The enzyme catalyses 2-(5Z,8Z,11Z,14Z)-eicosatetraenoyl-sn-glycero-3-phosphoethanolamine + 2 O2 = 2-(prostaglandin G2)-sn-glycero-3-phosphoethanolamine. The catalysed reaction is 2-(prostaglandin G2)-sn-glycero-3-phosphoethanolamine + AH2 = 2-(prostaglandin H2)-sn-glycero-3-phosphoethanolamine + A + H2O. It catalyses the reaction 2-(5Z,8Z,11Z,14Z)-eicosatetraenoyl-sn-glycero-3-phosphocholine + 2 O2 = 2-(prostaglandin G2)-sn-glycero-3-phosphocholine. It carries out the reaction 2-(prostaglandin G2)-sn-glycero-3-phosphocholine + AH2 = 2-(prostaglandin H2)-sn-glycero-3-phosphocholine + A + H2O. The enzyme catalyses (15S)-hydroperoxy-(5Z,8Z,11Z,13E)-eicosatetraenoate + AH2 = (15S)-hydroxy-(5Z,8Z,11Z,13E)-eicosatetraenoate + A + H2O. The catalysed reaction is 2-(5Z,8Z,11Z,14Z)-eicosatetraenoyl-sn-glycero-3-phosphocholine + AH2 + O2 = 2-[(15S)-hydroxy-(5Z,8Z,11Z,13E)-eicosatetraenoyl]-sn-glycero-3-phosphocholine + A + H2O. It catalyses the reaction 2-(5Z,8Z,11Z,14Z)-eicosatetraenoyl-sn-glycero-3-phosphocholine + AH2 + O2 = 2-[(15R)-hydroxy-(5Z,8Z,11Z,13E)-eicosatetraenoyl]-sn-glycero-3-phosphocholine + A + H2O. It carries out the reaction 2-(5Z,8Z,11Z,14Z)-eicosatetraenoyl-sn-glycero-3-phosphocholine + AH2 + O2 = 2-[(11R)-hydroxy-(5Z,8Z,12E,14Z)-eicosatetraenoyl]-sn-glycero-3-phosphocholine + A + H2O. The enzyme catalyses (9Z,12Z)-octadecadienoate + AH2 + O2 = 9-hydroxy-(10E,12Z)-octadecadienoate + A + H2O. The catalysed reaction is (9Z,12Z)-octadecadienoate + AH2 + O2 = 13-hydroxy-(9Z,11E)-octadecadienoate + A + H2O. It catalyses the reaction (5Z,8Z,11Z,14Z)-eicosatetraenoate + AH2 + O2 = (15R)-hydroxy-(5Z,8Z,11Z,13E)-eicosatetraenoate + A + H2O. It carries out the reaction (5Z,8Z,11Z,14Z)-eicosatetraenoate + AH2 + O2 = (11R)-hydroxy-(5Z,8Z,12E,14Z)-eicosatetraenoate + A + H2O. The enzyme catalyses (5Z,8Z,11Z,14Z,17Z)-eicosapentaenoate + AH2 + O2 = (11R)-hydroxy-(5Z,8Z,12E,14Z,17Z)-eicosapentaenoate + A + H2O. The catalysed reaction is (5Z,8Z,11Z,14Z,17Z)-eicosapentaenoate + AH2 + O2 = (18S)-hydroxy-(5Z,8Z,11Z,14Z,16E)-eicosapentaenoate + A + H2O. It catalyses the reaction (5Z,8Z,11Z,14Z,17Z)-eicosapentaenoate + AH2 + O2 = (18R)-hydroxy-(5Z,8Z,11Z,14Z,16E)-eicosapentaenoate + A + H2O. It carries out the reaction (5Z,8Z,11Z,14Z,17Z)-eicosapentaenoate + AH2 + O2 = (15R)-hydroxy-(5Z,8Z,11Z,13E,17Z)-eicosapentaenoate + A + H2O. The enzyme catalyses (5Z,8Z,11Z,14Z,17Z)-eicosapentaenoate + AH2 + O2 = (15S)-hydroxy-(5Z,8Z,11Z,13E,17Z)-eicosapentaenoate + A + H2O. The catalysed reaction is (7Z,10Z,13Z,16Z,19Z)-docosapentaenoate + AH2 + O2 = 13R-hydroxy-(7Z,10Z,14E,16Z,19Z)-docosapentaenoate + A + H2O. It catalyses the reaction (4Z,7Z,10Z,13Z,16Z,19Z)-docosahexaenoate + AH2 + O2 = 13-hydroxy-(4Z,7Z,10Z,14E,16Z,19Z)-docosahexaenoate + A + H2O. It carries out the reaction (5S)-hydroxy-(6E,8Z,11Z,14Z)-eicosatetraenoate + AH2 + O2 = (5S,15R)-dihydroxy-(6E,8Z,11Z,13E)-eicosatetraenoate + A + H2O. The enzyme catalyses (4Z,7Z,10Z,13Z,16Z,19Z)-docosahexaenoate + AH2 + O2 = 17R-hydroxy-(4Z,7Z,10Z,13Z,15E,19Z)-docosahexaenoate + A + H2O. The catalysed reaction is (5S)-hydroxy-(6E,8Z,11Z,14Z)-eicosatetraenoate + AH2 + O2 = (5S,15S)-dihydroxy-(6E,8Z,11Z,13E)-eicosatetraenoate + A + H2O. It catalyses the reaction (5S)-hydroxy-(6E,8Z,11Z,14Z)-eicosatetraenoate + AH2 + O2 = (5S,11R)-dihydroxy-(6E,8Z,12E,14Z)-eicosatetraenoate + A + H2O. It carries out the reaction 2-(5Z,8Z,11Z,14Z-eicosatetraenoyl)-glycerol + 2 O2 = 2-glyceryl-prostaglandin G2. The enzyme catalyses 2-glyceryl-prostaglandin G2 + AH2 = 2-glyceryl-prostaglandin H2 + A + H2O. The catalysed reaction is (5Z,8Z,11Z,14Z)-eicosatetraenoate + O2 = (15R)-hydroperoxy-(5Z,8Z,11Z,13E)-eicosatetraenoate. It catalyses the reaction (5Z,8Z,11Z,14Z)-eicosatetraenoate + O2 = 11R-hydroperoxy-(5Z,8Z,12E,14Z)-eicosatetraenoate. It carries out the reaction (9Z,12Z)-octadecadienoate + AH2 + O2 = (9R)-hydroxy-(10E,12Z)-octadecadienoate + A + H2O. The enzyme catalyses (9Z,12Z)-octadecadienoate + AH2 + O2 = (9S)-hydroxy-(10E,12Z)-octadecadienoate + A + H2O. The catalysed reaction is (9Z,12Z)-octadecadienoate + AH2 + O2 = (13S)-hydroxy-(9Z,11E)-octadecadienoate + A + H2O. It catalyses the reaction (9Z,12Z)-octadecadienoate + AH2 + O2 = (13R)-hydroxy-(9Z,11E)-octadecadienoate + A + H2O. The protein operates within lipid metabolism; prostaglandin biosynthesis. Functionally, dual cyclooxygenase and peroxidase in the biosynthesis pathway of prostanoids, a class of C20 oxylipins mainly derived from arachidonate ((5Z,8Z,11Z,14Z)-eicosatetraenoate, AA, C20:4(n-6)), with a particular role in the inflammatory response. The cyclooxygenase activity oxygenates AA to the hydroperoxy endoperoxide prostaglandin G2 (PGG2), and the peroxidase activity reduces PGG2 to the hydroxy endoperoxide prostaglandin H2 (PGH2), the precursor of all 2-series prostaglandins and thromboxanes. This complex transformation is initiated by abstraction of hydrogen at carbon 13 (with S-stereochemistry), followed by insertion of molecular O2 to form the endoperoxide bridge between carbon 9 and 11 that defines prostaglandins. The insertion of a second molecule of O2 (bis-oxygenase activity) yields a hydroperoxy group in PGG2 that is then reduced to PGH2 by two electrons. Similarly catalyzes successive cyclooxygenation and peroxidation of dihomo-gamma-linoleate (DGLA, C20:3(n-6)) and eicosapentaenoate (EPA, C20:5(n-3)) to corresponding PGH1 and PGH3, the precursors of 1- and 3-series prostaglandins. In an alternative pathway of prostanoid biosynthesis, converts 2-arachidonoyl lysophopholipids to prostanoid lysophopholipids, which are then hydrolyzed by intracellular phospholipases to release free prostanoids. Metabolizes 2-arachidonoyl glycerol yielding the glyceryl ester of PGH2, a process that can contribute to pain response. Generates lipid mediators from n-3 and n-6 polyunsaturated fatty acids (PUFAs) via a lipoxygenase-type mechanism. Oxygenates PUFAs to hydroperoxy compounds and then reduces them to corresponding alcohols. Plays a role in the generation of resolution phase interaction products (resolvins) during both sterile and infectious inflammation. Metabolizes docosahexaenoate (DHA, C22:6(n-3)) to 17R-HDHA, a precursor of the D-series resolvins (RvDs). As a component of the biosynthetic pathway of E-series resolvins (RvEs), converts eicosapentaenoate (EPA, C20:5(n-3)) primarily to 18S-HEPE that is further metabolized by ALOX5 and LTA4H to generate 18S-RvE1 and 18S-RvE2. In vascular endothelial cells, converts docosapentaenoate (DPA, C22:5(n-3)) to 13R-HDPA, a precursor for 13-series resolvins (RvTs) shown to activate macrophage phagocytosis during bacterial infection. In activated leukocytes, contributes to oxygenation of hydroxyeicosatetraenoates (HETE) to diHETES (5,15-diHETE and 5,11-diHETE). Can also use linoleate (LA, (9Z,12Z)-octadecadienoate, C18:2(n-6)) as substrate and produce hydroxyoctadecadienoates (HODEs) in a regio- and stereospecific manner, being (9R)-HODE ((9R)-hydroxy-(10E,12Z)-octadecadienoate) and (13S)-HODE ((13S)-hydroxy-(9Z,11E)-octadecadienoate) its major products. During neuroinflammation, plays a role in neuronal secretion of specialized preresolving mediators (SPMs) 15R-lipoxin A4 that regulates phagocytic microglia. The polypeptide is Prostaglandin G/H synthase 2 (PTGS2) (Neovison vison (American mink)).